We begin with the raw amino-acid sequence, 307 residues long: 4-hydroxy-tetrahydrodipicolinate synthase (307 aa).

Residue T49 participates in pyruvate binding. Catalysis depends on Y138, which acts as the Proton donor/acceptor. Residue K166 is the Schiff-base intermediate with substrate of the active site. I207 is a pyruvate binding site.

This sequence belongs to the DapA family. As to quaternary structure, homotetramer; dimer of dimers.

Its subcellular location is the cytoplasm. It catalyses the reaction L-aspartate 4-semialdehyde + pyruvate = (2S,4S)-4-hydroxy-2,3,4,5-tetrahydrodipicolinate + H2O + H(+). It participates in amino-acid biosynthesis; L-lysine biosynthesis via DAP pathway; (S)-tetrahydrodipicolinate from L-aspartate: step 3/4. Catalyzes the condensation of (S)-aspartate-beta-semialdehyde [(S)-ASA] and pyruvate to 4-hydroxy-tetrahydrodipicolinate (HTPA). The chain is 4-hydroxy-tetrahydrodipicolinate synthase from Limosilactobacillus reuteri (strain DSM 20016) (Lactobacillus reuteri).